The sequence spans 197 residues: Phosphoheptose isomerase (197 aa).

Residues 34–196 (MVQCLLGGNK…DRTLFPQDEQ (163 aa)) form the SIS domain. Residue 49–51 (NGG) coordinates substrate. Zn(2+) contacts are provided by His58 and Glu62. Substrate contacts are provided by residues Glu62, 91-92 (ND), 117-119 (STS), Ser122, and Gln172. Zn(2+) contacts are provided by Gln172 and His180.

Belongs to the SIS family. GmhA subfamily. As to quaternary structure, homotetramer. Requires Zn(2+) as cofactor.

The protein resides in the cytoplasm. It carries out the reaction 2 D-sedoheptulose 7-phosphate = D-glycero-alpha-D-manno-heptose 7-phosphate + D-glycero-beta-D-manno-heptose 7-phosphate. The protein operates within carbohydrate biosynthesis; D-glycero-D-manno-heptose 7-phosphate biosynthesis; D-glycero-alpha-D-manno-heptose 7-phosphate and D-glycero-beta-D-manno-heptose 7-phosphate from sedoheptulose 7-phosphate: step 1/1. Catalyzes the isomerization of sedoheptulose 7-phosphate in D-glycero-D-manno-heptose 7-phosphate. This chain is Phosphoheptose isomerase, found in Shewanella frigidimarina (strain NCIMB 400).